The primary structure comprises 244 residues: MKIDILTLFPDMFTGVFGSSILKKAQEKEAVNLRVVNFRDYTTSKHNSVDDYPYGGGAGMVLTPQPIFDAVEDLTKETERKPRVVLMCPQGERFTQKKAEELAGEEHLIFVCGHYEGYDERIREHLVTDEISIGDYVLTGGELASMVITDSVVRLLPGVLGNHASQVEDSFSTGLLEHPHYTRPADFRGMKVPDVLMSGNHKNIDEWRHKESLRRTYTRRPDLLDERELSKQEKKWLEEIKREQ.

Residues glycine 113 and 133–138 (IGDYVL) contribute to the S-adenosyl-L-methionine site.

The protein belongs to the RNA methyltransferase TrmD family. Homodimer.

It localises to the cytoplasm. It catalyses the reaction guanosine(37) in tRNA + S-adenosyl-L-methionine = N(1)-methylguanosine(37) in tRNA + S-adenosyl-L-homocysteine + H(+). Functionally, specifically methylates guanosine-37 in various tRNAs. This Bacillus cereus (strain B4264) protein is tRNA (guanine-N(1)-)-methyltransferase.